The primary structure comprises 252 residues: Probable transcriptional regulatory protein Haur_3030 (252 aa).

This sequence belongs to the TACO1 family.

The protein localises to the cytoplasm. The chain is Probable transcriptional regulatory protein Haur_3030 from Herpetosiphon aurantiacus (strain ATCC 23779 / DSM 785 / 114-95).